Reading from the N-terminus, the 251-residue chain is Cell division protein ZapD (251 aa).

Belongs to the ZapD family. As to quaternary structure, interacts with FtsZ.

It localises to the cytoplasm. Cell division factor that enhances FtsZ-ring assembly. Directly interacts with FtsZ and promotes bundling of FtsZ protofilaments, with a reduction in FtsZ GTPase activity. The protein is Cell division protein ZapD of Burkholderia ambifaria (strain MC40-6).